Reading from the N-terminus, the 197-residue chain is MDMQHRIRQLFQASIETKQQALEVLPPYIEQASLVMVNALLNEGKILSCGNGGSAGDAQHFSSELLNRFERERPSLPAVALTTDSSTITSIANDYSYNEVFSKQIRALGQPGDVLLAISTSGNSANVIQAIQAAHDREMLVVALTGRDGGGMASLLLPEDVEIRVPSKITARIQEVHLLAIHCLCDLIDRQLFGSEE.

The SIS domain maps to 36–197; the sequence is MVNALLNEGK…IDRQLFGSEE (162 aa). 51–53 is a binding site for substrate; the sequence is NGG. Positions 60 and 64 each coordinate Zn(2+). Substrate is bound by residues E64, 93–94, 119–121, S124, and Q174; these read ND and STS. Zn(2+) is bound by residues Q174 and H182.

Belongs to the SIS family. GmhA subfamily. In terms of assembly, homotetramer. Zn(2+) is required as a cofactor.

It is found in the cytoplasm. The enzyme catalyses 2 D-sedoheptulose 7-phosphate = D-glycero-alpha-D-manno-heptose 7-phosphate + D-glycero-beta-D-manno-heptose 7-phosphate. The protein operates within carbohydrate biosynthesis; D-glycero-D-manno-heptose 7-phosphate biosynthesis; D-glycero-alpha-D-manno-heptose 7-phosphate and D-glycero-beta-D-manno-heptose 7-phosphate from sedoheptulose 7-phosphate: step 1/1. Its function is as follows. Catalyzes the isomerization of sedoheptulose 7-phosphate in D-glycero-D-manno-heptose 7-phosphate. The chain is Phosphoheptose isomerase from Pseudomonas aeruginosa (strain LESB58).